We begin with the raw amino-acid sequence, 84 residues long: Transmembrane protein EP84R (84 aa).

2 helical membrane passes run 31-51 (VIGV…IIIL) and 60-80 (AASI…FLIY).

It belongs to the asfivirus EP84R family.

The protein localises to the virion membrane. This chain is Transmembrane protein EP84R, found in Ornithodoros (relapsing fever ticks).